Consider the following 674-residue polypeptide: Death-associated protein kinase related (674 aa).

One can recognise a Protein kinase domain in the interval 37–295; it reads EVEQTPFARG…ATGCLDHIWL (259 aa). ATP is bound by residues 43-51 and Lys66; that span reads FARGKFAAV. Asp160 functions as the Proton acceptor in the catalytic mechanism. 4 disordered regions span residues 308–388, 412–440, 511–583, and 614–650; these read QPQS…GGSI, TLTS…SDKE, DSSG…TSGS, and TSSA…HHHV. The segment covering 312–343 has biased composition (acidic residues); sequence DAEEEEEEDVDDDVEDEEEEEQVEEEEEETQN. Low complexity predominate over residues 352–363; it reads PQQQQQPVQQHQ. Residues 373–382 are compositionally biased toward basic residues; it reads KPTHNGHHRA. A phosphoserine mark is found at Ser384, Ser387, Ser435, Ser437, and Ser521. The segment covering 512–525 has biased composition (low complexity); sequence SSGSAVARRSGGAV. 2 stretches are compositionally biased toward polar residues: residues 526–541 and 555–564; these read TSSS…SVRL and YKKQTSQNGC. 2 stretches are compositionally biased toward low complexity: residues 565–583 and 614–631; these read SSTS…TSGS and TSSA…TSAA. The segment covering 632-650 has biased composition (basic residues); it reads HHLHHHHMHHHHHHHHHHV.

Belongs to the protein kinase superfamily. Ser/Thr protein kinase family.

It catalyses the reaction L-seryl-[protein] + ATP = O-phospho-L-seryl-[protein] + ADP + H(+). The catalysed reaction is L-threonyl-[protein] + ATP = O-phospho-L-threonyl-[protein] + ADP + H(+). The protein is Death-associated protein kinase related (Drak) of Drosophila melanogaster (Fruit fly).